The chain runs to 425 residues: Histidine--tRNA ligase (425 aa).

It belongs to the class-II aminoacyl-tRNA synthetase family. As to quaternary structure, homodimer.

The protein localises to the cytoplasm. It carries out the reaction tRNA(His) + L-histidine + ATP = L-histidyl-tRNA(His) + AMP + diphosphate + H(+). This chain is Histidine--tRNA ligase, found in Buchnera aphidicola subsp. Baizongia pistaciae (strain Bp).